Here is a 186-residue protein sequence, read N- to C-terminus: Elongation factor P (186 aa).

Belongs to the elongation factor P family.

It localises to the cytoplasm. Its pathway is protein biosynthesis; polypeptide chain elongation. Functionally, involved in peptide bond synthesis. Stimulates efficient translation and peptide-bond synthesis on native or reconstituted 70S ribosomes in vitro. Probably functions indirectly by altering the affinity of the ribosome for aminoacyl-tRNA, thus increasing their reactivity as acceptors for peptidyl transferase. In Elusimicrobium minutum (strain Pei191), this protein is Elongation factor P.